Consider the following 692-residue polypeptide: Elongation factor G (692 aa).

The region spanning 8–283 is the tr-type G domain; it reads QDLRNIGIVA…AVVDYLPSPL (276 aa). Residues 17–24, 81–85, and 135–138 each bind GTP; these read AHIDAGKT, DTPGH, and NKLD.

Belongs to the TRAFAC class translation factor GTPase superfamily. Classic translation factor GTPase family. EF-G/EF-2 subfamily.

It localises to the cytoplasm. Its function is as follows. Catalyzes the GTP-dependent ribosomal translocation step during translation elongation. During this step, the ribosome changes from the pre-translocational (PRE) to the post-translocational (POST) state as the newly formed A-site-bound peptidyl-tRNA and P-site-bound deacylated tRNA move to the P and E sites, respectively. Catalyzes the coordinated movement of the two tRNA molecules, the mRNA and conformational changes in the ribosome. This chain is Elongation factor G, found in Hydrogenobaculum sp. (strain Y04AAS1).